The sequence spans 1215 residues: MAVSLNDFISVKLKRYSRESPWERLRVPYRNKKQKKWASVHNNEAQLHSANKRNDNCLIQRSSTWRLGDMITLVIKDIPVTWLSNEGGKLYNLWEPLHDYGTIEFMKINEPLNGQTSTTAIVQFAPPPKVPFWEPNGKINVKGVDLAVQIDITAHRSHISRQVFSKNSFRSDQLVKIPLSSFKLGQVYDERIVPLFGVDCGITVTESNLLVYFNFKKLCVLFDASFDKQIETFRLDFDFHSIIGDVGTDYYDDHISLVFRFRFSPLIFRKSKNATESRVQTFWTASHLWRRHYDILPFNVSPTTASPIELLNCHNAPIGRCNVLVLSFSIRDESDKDDIAFLLHNLEKFNLKSQLDKVVFHLVPDYKHRCSLINDKEIEEEIAYLLQACLSKNLLSEIDLPIILANLKKLSKERAKKFLRLILTSKTALINPSELDFTKSFVFYDLSSASSIHIKKLYVTPTTLRIVEDSLEAGNRVIRNFKDFANRFMRVQITDEYYKQKIRGGSDGFRNEKLYSRIQQLLTYGIKVGNQIYEFLAFGNSQLREHGAYFFASGSDLNAKQIREWMGDFSEINSVSKYAARMGQCFSTTKEINRFCVDISLQDDIVRNNHCFTDGVGMASLSVIRRLSLEVKNHDMFPSAFQFRMGGYKGVLSLAPPTKLEYHQGNLVFPRRSQDKFKSFHSTLEVIKISRFSNAHLNMQLITLLEGLGVEKTVFLELTRSQLSKMNESINSKQKSILMLRDNVDEYHSTLIIADFIQAGFLERDDAFTENLLNLYYEWVLRLIKEKQKVSVPKGAYLLGVADETGTLKGHYDDAVLSVPEIFIQITDTSTSFGSYSTGKLKTRVIVGLCIVARNPSLHPGDVRVCKAVRCDELMHLKNVIVFPTTGDRSIPAMCSGGDLDGDEYTVIWDQRLLPKIVNYPPLLESSPKKSIDFLEGKPLIDSVKEFFVNYIKYDSLGLISNAWKAWAHDHDNNPEGIFGNVCLELAEMHSKAVDFAKSGVACKMQAKYHPKRYPDFMQKTKTRSFRSETAVGKIFRYAARFQRESGRPATYNPIMNTVYDPCMKLPRFKTEYLNVAEEVKKHYDNDLRSIMARFDISTEYEVYTAFILFKDDLAKTVNEYGLREEVSFQFDLLKKKYTQEYLEKCALSNQSAFDSSEYEERINSAVAATYDVTYDQRVKSVGNGTTEVLISFPYLFSSRLCQLSRKAMLTANNF.

Belongs to the RdRP family. As to quaternary structure, cid12, hrr1 and rdp1 interact forming the RNA-directed RNA polymerase complex (RDRC). The RDRC complex interacts with the RITS complex via interaction between ago1 and hrr1. Clr4 has a role in mediating this interaction.

The protein localises to the cytoplasm. The protein resides in the nucleus. Its subcellular location is the chromosome. It localises to the telomere. It is found in the centromere. It carries out the reaction RNA(n) + a ribonucleoside 5'-triphosphate = RNA(n+1) + diphosphate. Functionally, has a role in the RNA interference (RNAi) pathway which is important for heterochromatin formation, accurate chromosome segregation, centromere cohesion and telomere function during mitosis and meiosis. Required for both post-transcriptional and transcriptional gene silencing. Required for silencing at the centromeres and for initiation of transcriptionally silent heterochromatin at the mating type locus. Promotes histone H3 'Lys-10' methylation necessary for centromere function. Required for recruitment of swi6 and cohesin to an ectopic dg repeat. A member of the RNA-directed RNA polymerase complex (RDRC) which is involved in the generation of small interfering RNAs (siRNAs) and mediates their association with the RNA-induced transcriptional silencing (RITS) complex. RITS acts as a priming complex for dsRNA synthesis at the site of non-coding centromeric RNA. Its RNA-dependent RNA polymerase activity is critical in siRNA production necessary for heterochromatin formation. The sequence is that of RNA-dependent RNA polymerase 1 (rdp1) from Schizosaccharomyces pombe (strain 972 / ATCC 24843) (Fission yeast).